We begin with the raw amino-acid sequence, 215 residues long: MSLFGLGSRNQKTFRPKKSAPTGSKGAQLQKHIDATLGSGNLREAVKLPPGEDINEWLAVNTVDFFNQVNTMFGTLTEFCTPSNCPTMTAGPKYEYRWADGVTIKKPIEVSAPKYVEYLMDWMESQLDDETIFPQRLGAPFPPNFRDVVKTIFKRLFRVYAHIYHSHFQKIVSLKEEAHLNTCFKHFVLFTWEFRLIEKAELAPLEDLVDSIIQL.

The segment at 1 to 29 is disordered; sequence MSLFGLGSRNQKTFRPKKSAPTGSKGAQL. Positions 80, 85, 162, and 167 each coordinate Zn(2+).

The protein belongs to the MOB1/phocein family. Constitutively expressed with higher expression in roots, flowers and pods than in leaves and stems.

The protein resides in the cytoplasm. It is found in the cytoskeleton. The protein localises to the phragmoplast. This Medicago sativa subsp. falcata (Sickle medic) protein is MOB kinase activator-like 1B.